Here is a 708-residue protein sequence, read N- to C-terminus: Leukotoxin translocation ATP-binding protein LktB (708 aa).

The Peptidase C39 domain occupies 1–126 (MEVNHQSNDL…SCYQGKIILV (126 aa)). In terms of domain architecture, ABC transmembrane type-1 spans 155–437 (FLETLLVSIF…LAQLWQDFTQ (283 aa)). A run of 5 helical transmembrane segments spans residues 159–179 (LLVS…FQVV), 192–212 (LNII…LSGL), 270–290 (ALTS…MWYY), 296–316 (LVIL…SPIL), and 389–409 (VMVI…LSIG). Positions 469–704 (IAFKNIRFRY…NNGLYSYLHQ (236 aa)) constitute an ABC transporter domain. Position 503–510 (503–510 (GRSGSGKS)) interacts with ATP.

This sequence belongs to the ABC transporter superfamily. Protein-1 exporter (TC 3.A.1.109) family. In terms of assembly, homodimer.

Its subcellular location is the cell inner membrane. It catalyses the reaction ATP + H2O + proteinSide 1 = ADP + phosphate + proteinSide 2.. Its function is as follows. Part of the ABC transporter complex LktBD involved in leukotoxin export. Transmembrane domains (TMD) form a pore in the inner membrane and the ATP-binding domain (NBD) is responsible for energy generation. The polypeptide is Leukotoxin translocation ATP-binding protein LktB (lktB) (Pasteurella haemolytica-like sp. (strain 5943B)).